Here is a 411-residue protein sequence, read N- to C-terminus: Tyrosine--tRNA ligase (411 aa).

An L-tyrosine-binding site is contributed by Tyr-34. The 'HIGH' region motif lies at 39–48 (CTATSLHIGS). Tyr-171 and Gln-175 together coordinate L-tyrosine. The short motif at 231-235 (KMGKT) is the 'KMSKS' region element. Lys-234 provides a ligand contact to ATP. In terms of domain architecture, S4 RNA-binding spans 345 to 411 (ISAYELFHEA…GKKRHILVRV (67 aa)).

This sequence belongs to the class-I aminoacyl-tRNA synthetase family. TyrS type 1 subfamily. Homodimer.

It localises to the cytoplasm. It carries out the reaction tRNA(Tyr) + L-tyrosine + ATP = L-tyrosyl-tRNA(Tyr) + AMP + diphosphate + H(+). Catalyzes the attachment of tyrosine to tRNA(Tyr) in a two-step reaction: tyrosine is first activated by ATP to form Tyr-AMP and then transferred to the acceptor end of tRNA(Tyr). The sequence is that of Tyrosine--tRNA ligase from Rickettsia peacockii (strain Rustic).